The chain runs to 103 residues: Large ribosomal subunit protein uL24 (103 aa).

The protein belongs to the universal ribosomal protein uL24 family. As to quaternary structure, part of the 50S ribosomal subunit.

In terms of biological role, one of two assembly initiator proteins, it binds directly to the 5'-end of the 23S rRNA, where it nucleates assembly of the 50S subunit. One of the proteins that surrounds the polypeptide exit tunnel on the outside of the subunit. In Anoxybacillus flavithermus (strain DSM 21510 / WK1), this protein is Large ribosomal subunit protein uL24.